The chain runs to 591 residues: L-fucose isomerase (591 aa).

Catalysis depends on proton acceptor residues Glu-337 and Asp-361. Mn(2+)-binding residues include Glu-337, Asp-361, and His-528.

It belongs to the L-fucose isomerase family. As to quaternary structure, homohexamer. The cofactor is Mn(2+).

The protein resides in the cytoplasm. The catalysed reaction is L-fucose = L-fuculose. It functions in the pathway carbohydrate degradation; L-fucose degradation; L-lactaldehyde and glycerone phosphate from L-fucose: step 1/3. Functionally, converts the aldose L-fucose into the corresponding ketose L-fuculose. The protein is L-fucose isomerase of Salmonella paratyphi B (strain ATCC BAA-1250 / SPB7).